Consider the following 303-residue polypeptide: Nucleotide-binding protein Acry_0446 (303 aa).

Residue 10-17 participates in ATP binding; that stretch reads GLSGAGRN. A GTP-binding site is contributed by 54-57; it reads DART.

It belongs to the RapZ-like family.

Displays ATPase and GTPase activities. This is Nucleotide-binding protein Acry_0446 from Acidiphilium cryptum (strain JF-5).